The sequence spans 539 residues: Chaperonin GroEL (539 aa).

ATP contacts are provided by residues 30–33 (TLGP), Lys51, 87–91 (DGTTT), Gly415, 479–481 (NAA), and Asp495.

This sequence belongs to the chaperonin (HSP60) family. Forms a cylinder of 14 subunits composed of two heptameric rings stacked back-to-back. Interacts with the co-chaperonin GroES.

The protein localises to the cytoplasm. It carries out the reaction ATP + H2O + a folded polypeptide = ADP + phosphate + an unfolded polypeptide.. Functionally, together with its co-chaperonin GroES, plays an essential role in assisting protein folding. The GroEL-GroES system forms a nano-cage that allows encapsulation of the non-native substrate proteins and provides a physical environment optimized to promote and accelerate protein folding. The chain is Chaperonin GroEL from Enterobacter agglomerans (Erwinia herbicola).